The chain runs to 507 residues: Alpha-amylase 2 (507 aa).

The N-terminal stretch at 1–20 is a signal peptide; the sequence is MKFATILSTTALALSSLVAS. Residues Cys-62 and Cys-70 are joined by a disulfide bond. Position 115 (Trp-115) interacts with substrate. Asn-153 provides a ligand contact to Ca(2+). His-154 is a substrate binding site. A disulfide bond links Cys-182 and Cys-196. Ca(2+) contacts are provided by Glu-194 and Asp-207. Asn-229 is a glycosylation site (N-linked (GlcNAc...) asparagine). Arg-236 lines the substrate pocket. The Ca(2+) site is built by Asp-238, His-242, and Glu-262. Asp-238 acts as the Nucleophile in catalysis. A substrate-binding site is contributed by 241 to 242; the sequence is KH. Glu-262 functions as the Proton donor in the catalytic mechanism. Gly-266 contributes to the substrate binding site. Cys-272 and Cys-315 are joined by a disulfide. The substrate site is built by Asp-329 and Arg-376. A disulfide bridge links Cys-470 with Cys-505.

The protein belongs to the glycosyl hydrolase 13 family. Requires Ca(2+) as cofactor.

The catalysed reaction is Endohydrolysis of (1-&gt;4)-alpha-D-glucosidic linkages in polysaccharides containing three or more (1-&gt;4)-alpha-linked D-glucose units.. The chain is Alpha-amylase 2 (SWA2) from Schwanniomyces occidentalis (Yeast).